The chain runs to 186 residues: PRKR-interacting protein 1 (186 aa).

Residues 1 to 50 (MASSAASSVRPPRPKKEPQALIIPKNAAEEQKLKLERLMKNPDKAVPIPE) are interaction with EIF2AK2. 2 disordered regions span residues 39–61 (MKNP…RPPP) and 119–186 (AAEE…ITGR). The required for RNA-binding stretch occupies residues 51–143 (KMSEWAPRPP…LKEKKLLAKK (93 aa)). Positions 86 to 153 (RRREYQRQDY…MKLEQKKQSE (68 aa)) form a coiled coil. The tract at residues 126–138 (KRRKKRQKLKEKK) is required for nuclear localization. Residues 126–143 (KRRKKRQKLKEKKLLAKK) show a composition bias toward basic residues. Residues 153-162 (EASSETQEQP) are compositionally biased toward polar residues. Residues 170-179 (SGTEDEEEDA) show a composition bias toward acidic residues.

This sequence belongs to the PRKRIP1 family. In terms of assembly, component of the pre-catalytic and post-catalytic spliceosome complexes. Interacts with EIF2AK2.

It localises to the nucleus. The protein localises to the nucleolus. In terms of biological role, required for pre-mRNA splicing as component of the spliceosome. Binds double-stranded RNA. Inhibits EIF2AK2 kinase activity. In Bos taurus (Bovine), this protein is PRKR-interacting protein 1 (PRKRIP1).